Consider the following 379-residue polypeptide: Cobalt-precorrin-5B C(1)-methyltransferase (379 aa).

This sequence belongs to the CbiD family.

It carries out the reaction Co-precorrin-5B + S-adenosyl-L-methionine = Co-precorrin-6A + S-adenosyl-L-homocysteine. It functions in the pathway cofactor biosynthesis; adenosylcobalamin biosynthesis; cob(II)yrinate a,c-diamide from sirohydrochlorin (anaerobic route): step 6/10. Catalyzes the methylation of C-1 in cobalt-precorrin-5B to form cobalt-precorrin-6A. This Salmonella paratyphi B (strain ATCC BAA-1250 / SPB7) protein is Cobalt-precorrin-5B C(1)-methyltransferase.